A 1246-amino-acid polypeptide reads, in one-letter code: Zinc finger protein 687a (1246 aa).

Basic and acidic residues predominate over residues 24 to 47 (KEAIQSDTHGNHNEHSSVVGKERS). Residues 24-387 (KEAIQSDTHG…PTLVESASDA (364 aa)) are disordered. Polar residues-rich tracts occupy residues 88–111 (GEFSSADESQKSPQKGPSKDSSVP) and 163–195 (AFTNHPASTFQSLPLSNHPSVSSHLISPNFSSK). A compositionally biased stretch (low complexity) spans 287-301 (SSTNPTSLTSTNNLP). The span at 302 to 317 (VEEKDLEHIIEERDSP) shows a compositional bias: basic and acidic residues. Over residues 326-338 (QSRTSLPSNSQGA) the composition is skewed to polar residues. 2 stretches are compositionally biased toward basic and acidic residues: residues 341–350 (SKQRITREEA) and 360–375 (MQEKVDYGAEATEGKS). The C2H2-type 1 zinc-finger motif lies at 587–619 (YRCLECGDAFALERSLARHYDRRSMRIEVTCNH). The C2H2-type 2; degenerate zinc finger occupies 696–719 (HSCPECWSTFKGKQELVAHFQEVE). 3 C2H2-type zinc fingers span residues 817 to 840 (HKCPSCPMAFKSSSGAESHCASQH), 854 to 876 (YKCVMCRTVFTQKSLLSVHIDTH), and 885 to 908 (FKCPDCNKLFTQRTSLLEHVKDTH). The interval 907-953 (THRETSNHDGTSTQNSLVKMESSDGEEWGRDEEEDKGKVSDANSAVP) is disordered. The segment covering 914–923 (HDGTSTQNSL) has biased composition (polar residues). Residues 929–940 (SDGEEWGRDEEE) show a composition bias toward acidic residues. C2H2-type zinc fingers lie at residues 958 to 981 (WSCSQCQTHYTDKENYISHMTEQH) and 988 to 1011 (FPCTLCEGSFSSSSSLRRHIRVKH). Residues 1018-1044 (FYCQLCTGEKRSFSSKLILEKHIQAQH) form a C2H2-type 8; degenerate zinc finger. Positions 1045–1093 (AGERGTATQSQAVPQFTDGADSSSEHDAGVLGGSSVEPESRLAESTLTR) are disordered. 2 C2H2-type zinc fingers span residues 1137–1160 (AQCQQCGACFASSSSLSRHLFISH) and 1210–1232 (HICKVCGRYFSKPADLNTHFRTH).

This sequence belongs to the krueppel C2H2-type zinc-finger protein family. As to expression, widely expressed with highest levels in kidney, spleen and ovary.

Its subcellular location is the nucleus. May be involved in transcriptional regulation. In Danio rerio (Zebrafish), this protein is Zinc finger protein 687a (znf687a).